The primary structure comprises 547 residues: Mucin-13 (547 aa).

A compositionally biased stretch (low complexity) spans 1–210; the sequence is MSQSSGGTST…TVTSSSSTGS (210 aa). Residues 1–218 are disordered; the sequence is MSQSSGGTST…GSNDPCNSNP (218 aa). Residues 210 to 249 form the EGF-like 1 domain; that stretch reads SNDPCNSNPCKSPASCVKLYDSYFCLCLEGYYYNNSSSCV. 3 disulfide bridges follow: Cys214-Cys225, Cys219-Cys234, and Cys236-Cys248. N-linked (GlcNAc...) asparagine glycosylation is found at Asn243, Asn244, and Asn263. The region spanning 250–366 is the SEA domain; the sequence is KGTTFPGEIG…ERYFQQDRCD (117 aa). EGF-like domains follow at residues 361 to 401 and 401 to 441; these read QQDR…PFCV and VAPT…GKCE. 5 disulfide bridges follow: Cys365-Cys378, Cys370-Cys384, Cys386-Cys400, Cys409-Cys427, and Cys429-Cys440. Residues 459 to 479 traverse the membrane as a helical segment; it reads ILTIVGTIAGAFILILLIVFI. Topologically, residues 480–547 are cytoplasmic; sequence VSMRSKNKKK…NHRSMPRPDY (68 aa). Residues 525-547 are disordered; that stretch reads KTGVPSQTSNPYANHRSMPRPDY.

Homodimer of beta subunits. Post-translationally, cleaved into two subunits, alpha and beta, probably between the first EGF domain and the SEA domain. Beta subunit contains the cytoplasmic tail and alpha subunit the extracellular tail. The homooligomerization into dimers is dependent on intrachain disulfide bonds. In terms of processing, highly glycosylated.

It localises to the cell membrane. It is found in the secreted. In terms of biological role, epithelial and hemopoietic transmembrane mucin that may play a role in cell signaling. This Rattus norvegicus (Rat) protein is Mucin-13 (Muc13).